A 232-amino-acid chain; its full sequence is Lipoprotein-releasing system ATP-binding protein LolD (232 aa).

One can recognise an ABC transporter domain in the interval 11–231 (VYLHDIRRQY…SLENGHVVEL (221 aa)). Position 47–54 (47–54 (APSGSGKS)) interacts with ATP.

It belongs to the ABC transporter superfamily. Lipoprotein translocase (TC 3.A.1.125) family. As to quaternary structure, the complex is composed of two ATP-binding proteins (LolD) and two transmembrane proteins (LolC and LolE).

The protein localises to the cell inner membrane. In terms of biological role, part of the ABC transporter complex LolCDE involved in the translocation of mature outer membrane-directed lipoproteins, from the inner membrane to the periplasmic chaperone, LolA. Responsible for the formation of the LolA-lipoprotein complex in an ATP-dependent manner. The sequence is that of Lipoprotein-releasing system ATP-binding protein LolD from Nitrobacter hamburgensis (strain DSM 10229 / NCIMB 13809 / X14).